The following is a 77-amino-acid chain: Sec-independent protein translocase protein TatA (77 aa).

A helical membrane pass occupies residues Met1–Gly21. A compositionally biased stretch (basic and acidic residues) spans Gly42–Glu60. The interval Gly42–Val77 is disordered.

It belongs to the TatA/E family. In terms of assembly, the Tat system comprises two distinct complexes: a TatABC complex, containing multiple copies of TatA, TatB and TatC subunits, and a separate TatA complex, containing only TatA subunits. Substrates initially bind to the TatABC complex, which probably triggers association of the separate TatA complex to form the active translocon.

The protein localises to the cell inner membrane. Part of the twin-arginine translocation (Tat) system that transports large folded proteins containing a characteristic twin-arginine motif in their signal peptide across membranes. TatA could form the protein-conducting channel of the Tat system. This Bradyrhizobium diazoefficiens (strain JCM 10833 / BCRC 13528 / IAM 13628 / NBRC 14792 / USDA 110) protein is Sec-independent protein translocase protein TatA.